Consider the following 83-residue polypeptide: Putative membrane protein insertion efficiency factor (83 aa).

Residues 63 to 83 are disordered; sequence GGNDPVPDHFSLRRNKTDISD. Residues 68-83 are compositionally biased toward basic and acidic residues; it reads VPDHFSLRRNKTDISD.

It belongs to the UPF0161 family.

Its subcellular location is the cell membrane. Could be involved in insertion of integral membrane proteins into the membrane. In Streptococcus agalactiae serotype Ia (strain ATCC 27591 / A909 / CDC SS700), this protein is Putative membrane protein insertion efficiency factor.